Reading from the N-terminus, the 405-residue chain is Cysteine desulfurase IscS (405 aa).

Pyridoxal 5'-phosphate contacts are provided by residues 75–76, Asn-156, Gln-184, and 204–206; these read AT and SAH. Lys-207 is subject to N6-(pyridoxal phosphate)lysine. Thr-244 is a binding site for pyridoxal 5'-phosphate. Cys-329 functions as the Cysteine persulfide intermediate in the catalytic mechanism. Residue Cys-329 coordinates [2Fe-2S] cluster.

The protein belongs to the class-V pyridoxal-phosphate-dependent aminotransferase family. NifS/IscS subfamily. As to quaternary structure, homodimer. Forms a heterotetramer with IscU, interacts with other sulfur acceptors. Pyridoxal 5'-phosphate is required as a cofactor.

The protein localises to the cytoplasm. The enzyme catalyses (sulfur carrier)-H + L-cysteine = (sulfur carrier)-SH + L-alanine. Its pathway is cofactor biosynthesis; iron-sulfur cluster biosynthesis. Master enzyme that delivers sulfur to a number of partners involved in Fe-S cluster assembly, tRNA modification or cofactor biosynthesis. Catalyzes the removal of elemental sulfur atoms from cysteine to produce alanine. Functions as a sulfur delivery protein for Fe-S cluster synthesis onto IscU, an Fe-S scaffold assembly protein, as well as other S acceptor proteins. This chain is Cysteine desulfurase IscS, found in Acinetobacter baumannii (strain AB307-0294).